Here is a 439-residue protein sequence, read N- to C-terminus: Methionine aminopeptidase 2-2 (439 aa).

The segment at 1 to 90 (MAAQAPPTDE…SQLFPDKQYP (90 aa)) is disordered. Basic and acidic residues predominate over residues 10–23 (ELSKLSVEDADNKP). Over residues 35–45 (DEDDSEDDAED) the composition is skewed to acidic residues. Residues 54–68 (AKKKKKRKPRKKKKN) are compositionally biased toward basic residues. Residue His192 participates in substrate binding. 3 residues coordinate a divalent metal cation: Asp212, Asp223, and His292. A substrate-binding site is contributed by His300. 2 residues coordinate a divalent metal cation: Glu325 and Glu420.

The protein belongs to the peptidase M24A family. Methionine aminopeptidase eukaryotic type 2 subfamily. It depends on Co(2+) as a cofactor. Zn(2+) is required as a cofactor. Mn(2+) serves as cofactor. Requires Fe(2+) as cofactor.

It localises to the cytoplasm. The catalysed reaction is Release of N-terminal amino acids, preferentially methionine, from peptides and arylamides.. Cotranslationally removes the N-terminal methionine from nascent proteins. The N-terminal methionine is often cleaved when the second residue in the primary sequence is small and uncharged (Met-Ala-, Cys, Gly, Pro, Ser, Thr, or Val). This chain is Methionine aminopeptidase 2-2, found in Chaetomium globosum (strain ATCC 6205 / CBS 148.51 / DSM 1962 / NBRC 6347 / NRRL 1970) (Soil fungus).